Consider the following 750-residue polypeptide: Xylosyl- and glucuronyltransferase LARGE2s (750 aa).

The Cytoplasmic portion of the chain corresponds to 1–10; it reads MLCPCRGKLK. The chain crosses the membrane as a helical; Signal-anchor for type II membrane protein span at residues 11-31; the sequence is LLVVSLSFVILFTWLYLLVGN. Topologically, residues 32–750 are lumenal; sequence SENGRSLLLS…LKYLTAQRNI (719 aa). Residues asparagine 116, asparagine 142, and asparagine 228 are each glycosylated (N-linked (GlcNAc...) asparagine). The tract at residues 132–407 is xylosyltransferase activity; it reads LHVACVCAGH…FLEYDGNLLR (276 aa). The Mn(2+) site is built by aspartate 236 and aspartate 238. N-linked (GlcNAc...) asparagine glycosylation is present at asparagine 266. A glucuronyltransferase activity region spans residues 408–750; that stretch reads RELFGCPSQA…LKYLTAQRNI (343 aa). Residues aspartate 557 and aspartate 559 each contribute to the Mn(2+) site.

The protein in the C-terminal section; belongs to the glycosyltransferase 49 family. This sequence in the N-terminal section; belongs to the glycosyltransferase 8 family. The cofactor is Mn(2+).

The protein resides in the golgi apparatus membrane. It catalyses the reaction 3-O-[beta-D-GlcA-(1-&gt;3)-beta-D-Xyl-(1-&gt;4)-Rib-ol-P-Rib-ol-P-3-beta-D-GalNAc-(1-&gt;3)-beta-D-GlcNAc-(1-&gt;4)-(O-6-P-alpha-D-Man)]-Thr-[protein] + UDP-alpha-D-xylose = 3-O-[alpha-D-Xyl-(1-&gt;3)-beta-D-GlcA-(1-&gt;4)-beta-D-Xyl-(1-&gt;4)-Rib-ol-P-Rib-ol-P-3-beta-D-GalNAc-(1-&gt;3)-beta-D-GlcNAc-(1-&gt;4)-(O-6-P-alpha-D-Man)]-Thr-[protein] + UDP + H(+). The enzyme catalyses 3-O-{(1-&gt;[3)-alpha-D-Xyl-(1-&gt;3)-beta-D-GlcA-(1-&gt;](n)-4)-beta-D-Xyl-(1-&gt;4)-Rib-ol-P-Rib-ol-P-3-beta-D-GalNAc-(1-&gt;3)-beta-D-GlcNAc-(1-&gt;4)-O-6-P-alpha-D-Man}-L-Thr-[protein] + UDP-alpha-D-glucuronate = 3-O-{beta-D-GlcA-(1-&gt;[3)-alpha-D-Xyl-(1-&gt;3)-beta-D-GlcA-(1-&gt;](n)-4)-beta-D-Xyl-(1-&gt;4)-Rib-ol-P-Rib-ol-P-3-beta-D-GalNAc-(1-&gt;3)-beta-D-GlcNAc-(1-&gt;4)-O-6-P-alpha-D-Man}-L-Thr-[protein] + UDP + H(+). The catalysed reaction is 3-O-{beta-D-GlcA-(1-&gt;[3)-alpha-D-Xyl-(1-&gt;3)-beta-D-GlcA-(1-&gt;](n)-4)-beta-D-Xyl-(1-&gt;4)-Rib-ol-P-Rib-ol-P-3-beta-D-GalNAc-(1-&gt;3)-beta-D-GlcNAc-(1-&gt;4)-O-6-P-alpha-D-Man}-L-Thr-[protein] + UDP-alpha-D-xylose = 3-O-{(1-&gt;[3)-alpha-D-Xyl-(1-&gt;3)-beta-D-GlcA-(1-&gt;](n+1)-4)-beta-D-Xyl-(1-&gt;4)-Rib-ol-P-Rib-ol-P-3-beta-D-GalNAc-(1-&gt;3)-beta-D-GlcNAc-(1-&gt;4)-O-6-P-alpha-D-Man}-L-Thr-[protein] + UDP + H(+). Its pathway is protein modification; protein glycosylation. Bifunctional glycosyltransferase with both alpha-1,3-xylosyltransferase and beta-1,3-glucuronyltransferase activities involved in the maturation of alpha-dystroglycan (DAG1) by glycosylation leading to DAG1 binding to laminin G-like domain-containing extracellular proteins with high affinity and in a phosphorylated-O-mannosyl trisaccharide dependent manner. Elongates the glucuronyl-beta-1,4-xylose-beta disaccharide primer structure by adding repeating units [-3-Xylose-alpha-1,3-GlcA-beta-1-] to produce a heteropolysaccharide. Supports the maturation of DAG1 more effectively than LARGE1. In addition, can modify both heparan sulfate (HS)- and chondroitin/dermatan sulfate (CS/DS)-proteoglycans (PGs), namely GPC4, with a glycosaminoglycan (GAG)-like polysaccharide composed of xylose and glucuronic acid to confer laminin binding. This Danio rerio (Zebrafish) protein is Xylosyl- and glucuronyltransferase LARGE2s.